The following is a 343-amino-acid chain: MGNLPSAAKHCLNYQQLLREHLWSGESVAGALDPAQEASQLSGLPEYVKIVEVGPRDGLQNEKVIVPTDIKIEFINQLSQTGLSVIEVTSFVSSRWVPQMADHAEVMGGIHQYPGVRYPVLVPNLQGLQHAVAAGATEIAVFGAASESFSKKNINCSIEESMGRFEQVISSARHMNIPVRGYVSCALGCPYEGSIMPQKVTEVSKRLYSMGCYEISLGDTVGVGTPGSMKTMLESVMKEIPPGALAVHCHDTYGQALANILTALQMGINVVDSAVSGLGGCPYAKGASGNVATEDLIYMLNGMGLNTGVDLHKVMEAGDFICKAVNKTTNSKVAQASFKARLE.

The N-myristoyl glycine moiety is linked to residue Gly-2. The Pyruvate carboxyltransferase domain maps to 48-315; the sequence is VKIVEVGPRD…NTGVDLHKVM (268 aa). Residue Arg-56 participates in substrate binding. A divalent metal cation is bound by residues Asp-57, His-248, and His-250. The active site involves Cys-281. Asn-290 is a binding site for a divalent metal cation.

It belongs to the HMG-CoA lyase family. A divalent metal cation serves as cofactor. Present at high level in duodenum and small intestine (at protein level).

It is found in the cytoplasm. It localises to the cytosol. Its subcellular location is the endoplasmic reticulum membrane. It carries out the reaction (3S)-3-hydroxy-3-methylglutaryl-CoA = acetoacetate + acetyl-CoA. The protein operates within metabolic intermediate metabolism; (S)-3-hydroxy-3-methylglutaryl-CoA degradation; acetoacetate from (S)-3-hydroxy-3-methylglutaryl-CoA: step 1/1. Non-mitochondrial 3-hydroxy-3-methylglutaryl-CoA lyase that catalyzes a cation-dependent cleavage of (S)-3-hydroxy-3-methylglutaryl-CoA into acetyl-CoA and acetoacetate, a key step in ketogenesis, the products of which support energy production in nonhepatic animal tissues. This chain is 3-hydroxy-3-methylglutaryl-CoA lyase, cytoplasmic (Hmgcll1), found in Rattus norvegicus (Rat).